A 197-amino-acid chain; its full sequence is Dephospho-CoA kinase (197 aa).

In terms of domain architecture, DPCK spans 2–197 (IIGLTGGIAS…GAIKDLANLV (196 aa)). 10 to 15 (ASGKST) serves as a coordination point for ATP.

This sequence belongs to the CoaE family.

The protein localises to the cytoplasm. It carries out the reaction 3'-dephospho-CoA + ATP = ADP + CoA + H(+). Its pathway is cofactor biosynthesis; coenzyme A biosynthesis; CoA from (R)-pantothenate: step 5/5. In terms of biological role, catalyzes the phosphorylation of the 3'-hydroxyl group of dephosphocoenzyme A to form coenzyme A. The protein is Dephospho-CoA kinase of Streptococcus thermophilus (strain ATCC BAA-250 / LMG 18311).